A 331-amino-acid chain; its full sequence is Glyceraldehyde-3-phosphate dehydrogenase (331 aa).

NAD(+) contacts are provided by residues 11 to 12 (RI), aspartate 33, and arginine 78. D-glyceraldehyde 3-phosphate is bound by residues 148-150 (SCT), threonine 179, 208-209 (TG), and arginine 231. Cysteine 149 acts as the Nucleophile in catalysis. Asparagine 313 is an NAD(+) binding site.

This sequence belongs to the glyceraldehyde-3-phosphate dehydrogenase family. As to quaternary structure, homotetramer.

Its subcellular location is the cytoplasm. The enzyme catalyses D-glyceraldehyde 3-phosphate + phosphate + NAD(+) = (2R)-3-phospho-glyceroyl phosphate + NADH + H(+). The protein operates within carbohydrate degradation; glycolysis; pyruvate from D-glyceraldehyde 3-phosphate: step 1/5. The protein is Glyceraldehyde-3-phosphate dehydrogenase (GPD) of Eremothecium gossypii (strain ATCC 10895 / CBS 109.51 / FGSC 9923 / NRRL Y-1056) (Yeast).